Consider the following 477-residue polypeptide: MPKTVSPGVQALRDVVEKVYRELREAKERGEKVGWSSSKFPCELAESFGLHVGYPENQAAGIAANRDGEVMCQAAEDIGYDNDICGYARISLAYAAGFRGANKMDKDGNYVINPHSGKQMKDANGKKVFDADGKPVIDPKTLKPFATTDNIYEIAALPEGEEKTRRQNALHKYRQMTMPMPDFVLCCNNICNCMTKWYEDIARRHNIPLIMIDVPYNEFDHVNEANVKYIRSQLDTAIRQMEEITGKKFDEDKFEQCCQNANRTAKAWLKVCDYLQYKPAPFNGFDLFNHMADVVTARGRVEAAEAFELLAKELEQHVKEGTTTAPFKEQHRIMFEGIPCWPKLPNLFKPLKANGLNITGVVYAPAFGFVYNNLDELVKAYCKAPNSVSIEQGVAWREGLIRDNKVDGVLVHYNRSCKPWSGYMPEMQRRFTKDMGIPTAGFDGDQADPRNFNAAQYETRVQGLVEAMEANDEKKGK.

Belongs to the FldB/FldC dehydratase alpha/beta subunit family. As to quaternary structure, the (R)-2-hydroxyglutaryl-CoA dehydratase enzyme system is a heterodimer composed of an alpha subunit (HgdA) and a beta subunit (HgdB). [4Fe-4S] cluster serves as cofactor. Requires FMN as cofactor. Mg(2+) is required as a cofactor.

The protein localises to the cytoplasm. The enzyme catalyses (R)-2-hydroxyglutaryl-CoA = (2E)-glutaconyl-CoA + H2O. It participates in amino-acid degradation; L-glutamate degradation via hydroxyglutarate pathway; crotonoyl-CoA from L-glutamate: step 4/5. Its activity is regulated as follows. Activated by the HgdC. Reversibly inactivated by oxidants such as 2-nitrophenol, 3-nitrophenol, 4-nitrophenol, 4-nitrobenzoate, carbonyl cyanide 4-(trifluoromethoxy)phenylhydrazone (FCCP) and chloramphenicol. Irreversibly inactivated by oxidants such as hydroxylamine and nitrite. Its function is as follows. Involved in the fermentation of L-glutamate via the hydroxyglutarate pathway. Catalyzes the reversible syn-elimination of water from (R)-2-hydroxyglutaryl-CoA to yield (E)-glutaconyl-CoA. The dehydration mechanism involves a transient one electron reduction of the thioester from (R)-2-hydroxyglutaryl-CoA, generating a ketyl radical. Prior to (E)-glutaconyl-CoA formation, the ketyl radical is subsequently reoxidized by electron transfer back to the HgdA-HgdB complex (CompD) to avoid change in oxidation state of the substrate. The appropriate redox state of dehydratase HgdA-HgdB complex (CompD) is maintained by HgdC (CompA) via hydrolysis of ATP and ATP-dependent electron transfer. Since the electron is recycled, the dehydratase is able to perform several turnovers with only catalytic amounts of ATP and substoichiometric amounts of HgdC (CompA). This chain is (R)-2-hydroxyglutaryl-CoA dehydratase, subunit alpha, found in Acidaminococcus fermentans (strain ATCC 25085 / DSM 20731 / CCUG 9996 / CIP 106432 / VR4).